A 489-amino-acid polypeptide reads, in one-letter code: Glucose-6-phosphate isomerase (489 aa).

Residue glutamate 309 is the Proton donor of the active site. Catalysis depends on residues histidine 340 and lysine 459.

This sequence belongs to the GPI family.

It is found in the cytoplasm. The catalysed reaction is alpha-D-glucose 6-phosphate = beta-D-fructose 6-phosphate. It functions in the pathway carbohydrate biosynthesis; gluconeogenesis. Its pathway is carbohydrate degradation; glycolysis; D-glyceraldehyde 3-phosphate and glycerone phosphate from D-glucose: step 2/4. Functionally, catalyzes the reversible isomerization of glucose-6-phosphate to fructose-6-phosphate. The sequence is that of Glucose-6-phosphate isomerase from Idiomarina loihiensis (strain ATCC BAA-735 / DSM 15497 / L2-TR).